The sequence spans 152 residues: MKKLSEFGKGLYVAAKFSESTLDALEELQRSLKLPNPVPRDKLHTTIVYSRVNVPYKVASGSFEIADKGKLTVFETQSGNRALVLEMDSDYLSARHSYAKALGASYDYPDYRPHITLSYNIGVLNFSGEYKVPVVLDREYSEELDLEWSDKD.

Tyrosine 12 contacts 3',3'-cGAMP. Tyrosine 12 is a binding site for 3',3'-cUAMP. Catalysis depends on residues histidine 44 and threonine 46. 3',3'-cGAMP contacts are provided by phenylalanine 74 and tyrosine 108. Residues phenylalanine 74 and tyrosine 108 each contribute to the 3',3'-cUAMP site. Active-site residues include histidine 114 and threonine 116. 3',3'-cGAMP is bound by residues glutamate 142 and tryptophan 148. Residues glutamate 142 and tryptophan 148 each coordinate 3',3'-cUAMP.

Belongs to the anti-CBASS protein Acb1 family.

It carries out the reaction 3',3'-cUAMP + H2O = U[3'-5']pAp[3'] + H(+). The catalysed reaction is 3',3',3'-c-tri-AMP + H2O = A[3'-5']pA[3'-5']pAp[3'] + H(+). It catalyses the reaction 3',3',3'-cAAG + H2O = G[3'-5']pA[3'-5']pAp[3'] + H(+). The enzyme catalyses 3',3',3'-cAAG + H2O = A[3'-5']pG[3'-5']pAp[3'] + H(+). It carries out the reaction 3',3'-cGAMP + H2O = G[3'-5']pAp[3'] + H(+). Functionally, counteracts the host CBASS antiviral defense system. Phosphodiesterase that enables metal-independent hydrolysis of the host cyclic di- and trinucleotide CBASS signals such as 3'3'-cGAMP, 3'3'cUA, and 3'3'3'-cAAA. Does not cleave cGG or cA4. Besides evasion of the CBASS system, might also enable evasion of the type III CRISPR systems that use cA3 signals. The protein is Anti-CBASS protein Acb1 of Erwinia tracheiphila.